We begin with the raw amino-acid sequence, 191 residues long: MEPIRVIESRTVVLPRENVDTDQIIPARFLKVTDKKGLGKALFSDWRYAADGAPRPDFVMNRPEAQGCSILVAGDNFGCGSSREHAPWALVDAGVRAVISTRIADIFRNNALKNGLVPVVLDAASHAKLLAAPGASVRVDVEAQTVTLPDGSTARFPLDGFARYCLLNGVDELGFLLAQEADIAAFEGGRR.

It belongs to the LeuD family. LeuD type 1 subfamily. Heterodimer of LeuC and LeuD.

The enzyme catalyses (2R,3S)-3-isopropylmalate = (2S)-2-isopropylmalate. It functions in the pathway amino-acid biosynthesis; L-leucine biosynthesis; L-leucine from 3-methyl-2-oxobutanoate: step 2/4. In terms of biological role, catalyzes the isomerization between 2-isopropylmalate and 3-isopropylmalate, via the formation of 2-isopropylmaleate. This chain is 3-isopropylmalate dehydratase small subunit, found in Anaeromyxobacter sp. (strain K).